The chain runs to 96 residues: ATP synthase subunit c (96 aa).

Helical transmembrane passes span 9 to 29 and 58 to 78; these read FIAC…GCGI and IGLA…LILI.

This sequence belongs to the ATPase C chain family. As to quaternary structure, F-type ATPases have 2 components, F(1) - the catalytic core - and F(0) - the membrane proton channel. F(1) has five subunits: alpha(3), beta(3), gamma(1), delta(1), epsilon(1). F(0) has three main subunits: a(1), b(2) and c(10-14). The alpha and beta chains form an alternating ring which encloses part of the gamma chain. F(1) is attached to F(0) by a central stalk formed by the gamma and epsilon chains, while a peripheral stalk is formed by the delta and b chains.

It localises to the cell inner membrane. Functionally, f(1)F(0) ATP synthase produces ATP from ADP in the presence of a proton or sodium gradient. F-type ATPases consist of two structural domains, F(1) containing the extramembraneous catalytic core and F(0) containing the membrane proton channel, linked together by a central stalk and a peripheral stalk. During catalysis, ATP synthesis in the catalytic domain of F(1) is coupled via a rotary mechanism of the central stalk subunits to proton translocation. In terms of biological role, key component of the F(0) channel; it plays a direct role in translocation across the membrane. A homomeric c-ring of between 10-14 subunits forms the central stalk rotor element with the F(1) delta and epsilon subunits. This Desulfosudis oleivorans (strain DSM 6200 / JCM 39069 / Hxd3) (Desulfococcus oleovorans) protein is ATP synthase subunit c.